The primary structure comprises 2224 residues: Multifunctional protein r (2224 aa).

The tract at residues 1-369 (MASTDCYLAL…PQDTEFLFDV (369 aa)) is GATase (Glutamine amidotransferase). 3 residues coordinate L-glutamine: serine 55, glycine 240, and glycine 242. The 186-residue stretch at 195-380 (RIAILDCGLK…MESIQQKDLT (186 aa)) folds into the Glutamine amidotransferase type-1 domain. The active-site Nucleophile; for GATase activity is the cysteine 269. L-glutamine contacts are provided by leucine 270, glutamine 273, asparagine 311, glycine 313, and tyrosine 314. Residues histidine 353 and glutamate 355 each act as for GATase activity in the active site. Residues 370-415 (FMESIQQKDLTIPQLIEQRLRPTTPAIDSAPVMPRKVLILGSGGLS) form a linker region. The CPSase (Carbamoyl-phosphate synthase) stretch occupies residues 416 to 1470 (IGQAGEFDYS…KPPMKTHTDC (1055 aa)). ATP contacts are provided by arginine 525, arginine 565, glycine 571, glycine 572, lysine 602, glutamate 609, glycine 635, isoleucine 636, histidine 637, glutamine 678, and glutamate 692. 2 ATP-grasp domains span residues 529 to 721 (AERV…KLAL) and 1066 to 1257 (SRML…RAIV). The Mg(2+) site is built by glutamine 678, glutamate 692, and asparagine 694. Mn(2+)-binding residues include glutamine 678, glutamate 692, and asparagine 694. The ATP site is built by arginine 1102, lysine 1141, leucine 1143, glutamate 1148, glycine 1173, valine 1174, histidine 1175, serine 1176, glutamine 1216, and glutamate 1228. 3 residues coordinate Mg(2+): glutamine 1216, glutamate 1228, and asparagine 1230. 3 residues coordinate Mn(2+): glutamine 1216, glutamate 1228, and asparagine 1230. One can recognise an MGS-like domain in the interval 1322–1477 (FQIPKNAVLL…TDCMTSRRIV (156 aa)). Residues 1471–1484 (MTSRRIVKLPGFID) form a linker region. The DHOase (dihydroorotase) stretch occupies residues 1485–1800 (VHVHLREPGA…GTKVKGRVHR (316 aa)). Positions 1486 and 1488 each coordinate Zn(2+). Residues arginine 1490 and asparagine 1520 each coordinate (S)-dihydroorotate. Residues lysine 1571, histidine 1605, cysteine 1628, histidine 1629, and glutamate 1652 each contribute to the Zn(2+) site. Lysine 1571 carries the N6-carboxylysine modification. Arginine 1676 is a binding site for (S)-dihydroorotate. Aspartate 1701 lines the Zn(2+) pocket. The For DHOase activity role is filled by aspartate 1701. (S)-dihydroorotate contacts are provided by histidine 1705 and proline 1717. Residues 1801–1912 (VVLRGEVAFV…QRTTNSNPVA (112 aa)) are linker. A disordered region spans residues 1821–1843 (GQNVRPKQSPLASEASQDLLPSD). Residues serine 1883, serine 1885, serine 1892, and serine 1894 each carry the phosphoserine modification. Positions 1913 to 2224 (HSLMGKHILA…MVVGGRNTAL (312 aa)) are ATCase (Aspartate transcarbamylase). The carbamoyl phosphate site is built by arginine 1970 and threonine 1971. An L-aspartate-binding site is contributed by lysine 1998. Arginine 2019, histidine 2047, and glutamine 2050 together coordinate carbamoyl phosphate. L-aspartate-binding residues include arginine 2080 and arginine 2141. Carbamoyl phosphate contacts are provided by leucine 2180 and proline 2181.

It in the N-terminal section; belongs to the CarA family. The protein in the 2nd section; belongs to the CarB family. This sequence in the 3rd section; belongs to the metallo-dependent hydrolases superfamily. DHOase family. CAD subfamily. In the C-terminal section; belongs to the aspartate/ornithine carbamoyltransferase superfamily. ATCase family. Requires Mg(2+) as cofactor. Mn(2+) is required as a cofactor. The cofactor is Zn(2+).

The protein resides in the cytoplasm. The enzyme catalyses hydrogencarbonate + L-glutamine + 2 ATP + H2O = carbamoyl phosphate + L-glutamate + 2 ADP + phosphate + 2 H(+). The catalysed reaction is L-glutamine + H2O = L-glutamate + NH4(+). It catalyses the reaction hydrogencarbonate + NH4(+) + 2 ATP = carbamoyl phosphate + 2 ADP + phosphate + 2 H(+). It carries out the reaction carbamoyl phosphate + L-aspartate = N-carbamoyl-L-aspartate + phosphate + H(+). The enzyme catalyses (S)-dihydroorotate + H2O = N-carbamoyl-L-aspartate + H(+). It functions in the pathway pyrimidine metabolism; UMP biosynthesis via de novo pathway; (S)-dihydroorotate from bicarbonate: step 1/3. The protein operates within pyrimidine metabolism; UMP biosynthesis via de novo pathway; (S)-dihydroorotate from bicarbonate: step 2/3. Its pathway is pyrimidine metabolism; UMP biosynthesis via de novo pathway; (S)-dihydroorotate from bicarbonate: step 3/3. Its function is as follows. Multifunctional protein that encodes the first 3 enzymatic activities of the de novo pyrimidine pathway: carbamoylphosphate synthetase (CPSase; EC 6.3.5.5), aspartate transcarbamylase (ATCase; EC 2.1.3.2) and dihydroorotase (DHOase; EC 3.5.2.3). The CPSase-function is accomplished in 2 steps, by a glutamine-dependent amidotransferase activity (GATase) that binds and cleaves glutamine to produce ammonia, followed by an ammonium-dependent carbamoyl phosphate synthetase, which reacts with the ammonia, hydrogencarbonate and ATP to form carbamoyl phosphate. The endogenously produced carbamoyl phosphate is sequestered and channeled to the ATCase active site. ATCase then catalyzes the formation of carbamoyl-L-aspartate from L-aspartate and carbamoyl phosphate. In the last step, DHOase catalyzes the cyclization of carbamoyl aspartate to dihydroorotate. This is Multifunctional protein r (r) from Drosophila melanogaster (Fruit fly).